Consider the following 912-residue polypeptide: DNA ligase 4 (912 aa).

Glutamate 276, threonine 277, lysine 278, leucine 279, arginine 283, glutamate 336, lysine 350, phenylalanine 372, glutamate 432, lysine 437, lysine 454, and lysine 456 together coordinate ATP. Catalysis depends on lysine 278, which acts as the N6-AMP-lysine intermediate. Glutamate 336 is a binding site for Mg(2+). Position 432 (glutamate 432) interacts with Mg(2+). Positions 615–625 (LASKHLYIDEY) are required for catalytic activity. 2 consecutive BRCT domains span residues 659–748 (KVSS…PAFM) and 809–912 (CKLC…QFLI).

Belongs to the ATP-dependent DNA ligase family. Interacts with XRCC4; the LIG4-XRCC4 subcomplex has a 1:2 stoichiometry. Component of the core long-range non-homologous end joining (NHEJ) complex (also named DNA-PK complex) composed of PRKDC, LIG4, XRCC4, XRCC6/Ku70, XRCC5/Ku86 and NHEJ1/XLF. Additional component of the NHEJ complex includes PAXX. Following autophosphorylation, PRKDC dissociates from DNA, leading to formation of the short-range NHEJ complex, composed of LIG4, XRCC4, XRCC6/Ku70, XRCC5/Ku86 and NHEJ1/XLF. It depends on Mg(2+) as a cofactor.

It is found in the nucleus. The enzyme catalyses ATP + (deoxyribonucleotide)n-3'-hydroxyl + 5'-phospho-(deoxyribonucleotide)m = (deoxyribonucleotide)n+m + AMP + diphosphate.. In terms of biological role, DNA ligase involved in DNA non-homologous end joining (NHEJ); required for double-strand break (DSB) repair and V(D)J recombination. Catalyzes the NHEJ ligation step of the broken DNA during DSB repair by resealing the DNA breaks after the gap filling is completed. Joins single-strand breaks in a double-stranded polydeoxynucleotide in an ATP-dependent reaction. LIG4 is mechanistically flexible: it can ligate nicks as well as compatible DNA overhangs alone, while in the presence of XRCC4, it can ligate ends with 2-nucleotides (nt) microhomology and 1-nt gaps. Forms a subcomplex with XRCC4; the LIG4-XRCC4 subcomplex is responsible for the NHEJ ligation step and XRCC4 enhances the joining activity of LIG4. The chain is DNA ligase 4 from Gallus gallus (Chicken).